Reading from the N-terminus, the 163-residue chain is Nucleotide-binding protein APJL_1242 (163 aa).

This sequence belongs to the YajQ family.

In terms of biological role, nucleotide-binding protein. This Actinobacillus pleuropneumoniae serotype 3 (strain JL03) protein is Nucleotide-binding protein APJL_1242.